A 233-amino-acid chain; its full sequence is Phosphoglycolate phosphatase (233 aa).

Residue aspartate 13 is the Nucleophile of the active site. Mg(2+)-binding residues include aspartate 13, aspartate 15, and aspartate 175.

Belongs to the HAD-like hydrolase superfamily. CbbY/CbbZ/Gph/YieH family. Mg(2+) is required as a cofactor.

It carries out the reaction 2-phosphoglycolate + H2O = glycolate + phosphate. It functions in the pathway organic acid metabolism; glycolate biosynthesis; glycolate from 2-phosphoglycolate: step 1/1. In terms of biological role, specifically catalyzes the dephosphorylation of 2-phosphoglycolate. Is involved in the dissimilation of the intracellular 2-phosphoglycolate formed during the DNA repair of 3'-phosphoglycolate ends, a major class of DNA lesions induced by oxidative stress. In Agrobacterium fabrum (strain C58 / ATCC 33970) (Agrobacterium tumefaciens (strain C58)), this protein is Phosphoglycolate phosphatase.